A 457-amino-acid polypeptide reads, in one-letter code: Argininosuccinate lyase (457 aa).

Belongs to the lyase 1 family. Argininosuccinate lyase subfamily.

Its subcellular location is the cytoplasm. It catalyses the reaction 2-(N(omega)-L-arginino)succinate = fumarate + L-arginine. The protein operates within amino-acid biosynthesis; L-arginine biosynthesis; L-arginine from L-ornithine and carbamoyl phosphate: step 3/3. This chain is Argininosuccinate lyase, found in Citrobacter koseri (strain ATCC BAA-895 / CDC 4225-83 / SGSC4696).